The following is a 194-amino-acid chain: Adenylate kinase isoenzyme 1 (194 aa).

19 to 24 (GSGKGT) lines the ATP pocket. Residues 39 to 68 (STGDLLRAEVSSGSERGKKLQAIMEKGELV) form an NMP region. AMP contacts are provided by residues threonine 40, arginine 45, 66-68 (ELV), 95-98 (GYPR), and glutamine 102. The tract at residues 132-142 (KRGETSGRVDD) is LID. Arginine 133 is a binding site for ATP. Arginine 139 and arginine 150 together coordinate AMP. Glycine 178 lines the ATP pocket.

Belongs to the adenylate kinase family. AK1 subfamily. Monomer. Mg(2+) serves as cofactor. In terms of tissue distribution, skeletal muscle.

It is found in the cytoplasm. The catalysed reaction is a ribonucleoside 5'-phosphate + ATP = a ribonucleoside 5'-diphosphate + ADP. It carries out the reaction AMP + ATP = 2 ADP. It catalyses the reaction dAMP + ATP = dADP + ADP. The enzyme catalyses dATP + AMP = dADP + ADP. The catalysed reaction is dAMP + dATP = 2 dADP. It carries out the reaction a 2'-deoxyribonucleoside 5'-diphosphate + ATP = a 2'-deoxyribonucleoside 5'-triphosphate + ADP. It catalyses the reaction a ribonucleoside 5'-diphosphate + ATP = a ribonucleoside 5'-triphosphate + ADP. The enzyme catalyses CDP + GTP = CTP + GDP. The catalysed reaction is GDP + ATP = GTP + ADP. It carries out the reaction UDP + ATP = UTP + ADP. It catalyses the reaction GTP + UDP = UTP + GDP. The enzyme catalyses dTDP + GTP = dTTP + GDP. The catalysed reaction is dCDP + GTP = dCTP + GDP. It carries out the reaction dGDP + ATP = dGTP + ADP. It catalyses the reaction dADP + GTP = dATP + GDP. The enzyme catalyses thiamine diphosphate + ADP = thiamine triphosphate + AMP. Its function is as follows. Catalyzes the reversible transfer of the terminal phosphate group between ATP and AMP. Also displays broad nucleoside diphosphate kinase activity. Plays an important role in cellular energy homeostasis and in adenine nucleotide metabolism. Also catalyzes at a very low rate the synthesis of thiamine triphosphate (ThTP) from thiamine diphosphate (ThDP) and ADP. The protein is Adenylate kinase isoenzyme 1 of Gallus gallus (Chicken).